We begin with the raw amino-acid sequence, 568 residues long: MMSVWFIQLAIFAQSRIIEVFPEQGKDIENIALALKKAADCKGRPVTVKFSPGIYQLDRAKSSQVLYYISNTTSELDDPDPTKHIGLYLNTLKNITIDGCGSTLLMNGEMTSFVLDKCEGIVLKNFNIDYKHPTQTEVEVLEEGNDYLIVQVHPTSQYRIVDAQLEWYGDGWSFKNGIAQSYDRISEMTWRSWSPMENLLRTVELRPNVLYLQYKEKPQVGLHTIFQMRDSFRDEVSGFVNRSKGILLENINFYYLGNFGVVCQYSENITVDRCNFAPRPGSGRTNAGFADFIQVSGCRGMIDIKNSRFIGAHDDPINIHGTHLRVIEFLSDNRLKLRFMHDQTFGFEAFFKGDDIELVDSRSLLVVGKCKVKEAKLVTPREMELTLSSPLSSEVMQQKDLVIENVTWTPEVRITNNYFARVPTRGILITTRRKSLIEGNTFYGMQMSGIFVADDGLSWYESGPVHDLTIRQNTFLNCGEPIISIDPENREYKGAVHKNITIEENYFYMRKNSSCAIRAKAVDGLMIRHNLIYSLDTEKNKESDFIQMYNCNEVTIKENRVQLHHLFK.

The first 17 residues, 1 to 17, serve as a signal peptide directing secretion; that stretch reads MMSVWFIQLAIFAQSRI. PbH1 repeat units follow at residues 87–125, 243–265, 299–321, 409–431, 432–454, and 465–486; these read LYLNTLKNITIDGCGSTLLMNGEMTSFVLDKCEGIVLKN, SKGILLENINFYYLGNFGVVCQY, RGMIDIKNSRFIGAHDDPINIHG, TPEVRITNNYFARVPTRGILITT, RRKSLIEGNTFYGMQMSGIFVAD, and VHDLTIRQNTFLNCGEPIISID.

The protein belongs to the glycosyl hydrolase 110 family. A subfamily.

It catalyses the reaction Hydrolysis of terminal, non-reducing branched (1-&gt;3)-alpha-D-galactosidic residues, producing free D-galactose.. The catalysed reaction is Hydrolysis of terminal, non-reducing alpha-D-galactose residues in alpha-D-galactosides, including galactose oligosaccharides, galactomannans and galactolipids.. In terms of biological role, alpha-galactosidase that specifically removes branched alpha-1,3-linked galactose residues present in blood group B antigens. Has no activity toward linear alpha-1,3-linked galactose residues. The chain is Alpha-1,3-galactosidase A (glaA) from Bacteroides thetaiotaomicron (strain ATCC 29148 / DSM 2079 / JCM 5827 / CCUG 10774 / NCTC 10582 / VPI-5482 / E50).